The following is a 93-amino-acid chain: Putative aspartate aminotransferase (93 aa).

The protein belongs to the class-I pyridoxal-phosphate-dependent aminotransferase family. As to quaternary structure, homodimer. It depends on pyridoxal 5'-phosphate as a cofactor.

The protein resides in the cytoplasm. It catalyses the reaction L-aspartate + 2-oxoglutarate = oxaloacetate + L-glutamate. This chain is Putative aspartate aminotransferase, found in Methylorubrum extorquens (Methylobacterium dichloromethanicum).